Here is a 66-residue protein sequence, read N- to C-terminus: MAVVVVQEGESFEKALKRFKKICEKEGIITEMKRREFYEKPSVKRKRKQRAARKRLIKALKKKGLL.

The protein belongs to the bacterial ribosomal protein bS21 family.

In Persephonella marina (strain DSM 14350 / EX-H1), this protein is Small ribosomal subunit protein bS21.